The chain runs to 206 residues: Urease accessory protein UreG (206 aa).

11-18 lines the GTP pocket; that stretch reads GPVGAGKT.

It belongs to the SIMIBI class G3E GTPase family. UreG subfamily. As to quaternary structure, homodimer. UreD, UreF and UreG form a complex that acts as a GTP-hydrolysis-dependent molecular chaperone, activating the urease apoprotein by helping to assemble the nickel containing metallocenter of UreC. The UreE protein probably delivers the nickel.

The protein localises to the cytoplasm. Functionally, facilitates the functional incorporation of the urease nickel metallocenter. This process requires GTP hydrolysis, probably effectuated by UreG. This Ureaplasma parvum serovar 3 (strain ATCC 700970) protein is Urease accessory protein UreG.